Reading from the N-terminus, the 239-residue chain is Tetraspanin-9 (239 aa).

Topologically, residues 1–13 (MARGCLCCLKYMM) are cytoplasmic. The chain crosses the membrane as a helical span at residues 14–34 (FLFNLIFWLCGCGLLGVGIWL). Residues 35–55 (SVSQGNFATFSPSFPSLSAAN) are Extracellular-facing. Residues 56–76 (LVIVIGTVVMVTGFLGCLGAI) form a helical membrane-spanning segment. The Cytoplasmic segment spans residues 77-85 (KENKCLLLS). A helical membrane pass occupies residues 86-106 (FFIILLIILLTELILLILFFV). The Extracellular segment spans residues 107–203 (YMDKVNENAK…VKMWFDDNKH (97 aa)). Asn180 carries N-linked (GlcNAc...) asparagine glycosylation. The chain crosses the membrane as a helical span at residues 204 to 224 (VLGTIGMCILIIQILGMAFSM). Residues 225 to 239 (TLFQQIHRTGKKYDA) lie on the Cytoplasmic side of the membrane.

It belongs to the tetraspanin (TM4SF) family.

The protein localises to the membrane. In Xenopus laevis (African clawed frog), this protein is Tetraspanin-9 (tspan9).